The following is a 322-amino-acid chain: Beta-1,3-galactosyltransferase bre-5 (322 aa).

Over 1–16 (MFLCVRILKRKYHELS) the chain is Cytoplasmic. Residues 17–37 (SFQKLLIFTITIFLLWVLGVV) traverse the membrane as a helical; Signal-anchor for type II membrane protein segment. Residues 38 to 322 (DKFRETSFGD…YEYSQLNGFE (285 aa)) are Lumenal-facing. N-linked (GlcNAc...) asparagine glycosylation is present at N150.

This sequence belongs to the glycosyltransferase 31 family. In terms of tissue distribution, expressed in the gut.

It is found in the golgi apparatus membrane. It functions in the pathway protein modification; protein glycosylation. Transfers N-acetylgalactosamine onto mannose groups of carbohydrate substrates. Required for susceptibility to pore-forming crystal toxins in conjunction with bre-1, bre-2, bre-3, and bre-4. Involved in resistance to the nematotoxic C.cinerea galectin Cgl2. The sequence is that of Beta-1,3-galactosyltransferase bre-5 from Caenorhabditis elegans.